Reading from the N-terminus, the 349-residue chain is Nucleoporin SEH1 (349 aa).

WD repeat units lie at residues 7–46 (GHDDLVHDVVYDFYGRHVATCSSDQHIKVFKLDKDTSNWE), 53–94 (AHDS…EECS), 106–147 (DSKG…DLRS), 153–192 (EMKVLSIPPANHLQSDFCLSWCPSRFSPEKLAVSALEQAI), and 210–253 (GHKS…SPLA). Serine 257 carries the phosphoserine modification. Positions 263-285 (MFDNSADVDMDAQGRSDSNTEEK) are disordered. A compositionally biased stretch (basic and acidic residues) spans 274 to 285 (AQGRSDSNTEEK). The WD 6 repeat unit spans residues 302–341 (DHNGEVWSVSWNLTGTILSSAGDDGKVRLWKATYSNEFKC).

This sequence belongs to the WD repeat SEC13 family. In terms of assembly, component of the nuclear pore complex (NPC). NPC constitutes the exclusive means of nucleocytoplasmic transport. NPCs allow the passive diffusion of ions and small molecules and the active, nuclear transport receptor-mediated bidirectional transport of macromolecules such as proteins, RNAs, ribonucleoparticles (RNPs), and ribosomal subunits across the nuclear envelope. Due to its 8-fold rotational symmetry, all subunits are present with 8 copies or multiples thereof. SEH1 is part of the heptameric 0.5 MDa autoassembling NUP84 NPC subcomplex (NUP84, NUP85, NUP120, NUP133, NUP145C, SEC13 and SEH1). Component of the SEA complex composed of at least IML1/SEA1, RTC1/SEA2, MTC5/SEA3, NPR2, NPR3, SEA4, SEC13 and SEH1.

The protein resides in the nucleus. The protein localises to the nuclear pore complex. Its subcellular location is the nucleus membrane. It is found in the vacuole membrane. Functionally, functions as a component of the nuclear pore complex (NPC). NPC components, collectively referred to as nucleoporins (NUPs), can play the role of both NPC structural components and of docking or interaction partners for transiently associated nuclear transport factors. Involved in nuclear poly(A)+ RNA export and NPC biogenesis. It is also required for normal nuclear morphology. Component of the SEA complex which coats the vacuolar membrane and is involved in intracellular trafficking, autophagy, response to nitrogen starvation, and amino acid biogenesis. The chain is Nucleoporin SEH1 (SEH1) from Saccharomyces cerevisiae (strain ATCC 204508 / S288c) (Baker's yeast).